Reading from the N-terminus, the 28-residue chain is Morintide mO6 (28 aa).

A Chitin-binding type-1 domain is found at 1-28 (NGLCCSQYGFCGTTSAYCSRANGCQSNC). Intrachain disulfides connect cysteine 4/cysteine 18 and cysteine 24/cysteine 28.

As to expression, seeds (at protein level).

In terms of biological role, chitin-binding protein which functions in defense against chitin-containing fungal pathogens. The sequence is that of Morintide mO6 from Moringa oleifera (Horseradish tree).